Consider the following 70-residue polypeptide: UPF0337 protein BT9727_3385 (70 aa).

This sequence belongs to the UPF0337 (CsbD) family.

This is UPF0337 protein BT9727_3385 from Bacillus thuringiensis subsp. konkukian (strain 97-27).